The primary structure comprises 88 residues: Small ribosomal subunit protein uS19 (88 aa).

It belongs to the universal ribosomal protein uS19 family.

Protein S19 forms a complex with S13 that binds strongly to the 16S ribosomal RNA. The protein is Small ribosomal subunit protein uS19 (rpsS) of Chlamydia pneumoniae (Chlamydophila pneumoniae).